Here is a 113-residue protein sequence, read N- to C-terminus: Integration host factor subunit alpha (113 aa).

The tract at residues 87–113 (NALNGEVSDETTEGADDDDDEEGEGDE) is disordered. The segment covering 93–113 (VSDETTEGADDDDDEEGEGDE) has biased composition (acidic residues).

The protein belongs to the bacterial histone-like protein family. Heterodimer of an alpha and a beta chain.

This protein is one of the two subunits of integration host factor, a specific DNA-binding protein that functions in genetic recombination as well as in transcriptional and translational control. The sequence is that of Integration host factor subunit alpha from Anaeromyxobacter dehalogenans (strain 2CP-1 / ATCC BAA-258).